The following is a 620-amino-acid chain: DNA mismatch repair protein MutL (620 aa).

Residues 353-375 (SRANGANDFTGRPFSGTERPRGG) form a disordered region.

Belongs to the DNA mismatch repair MutL/HexB family.

In terms of biological role, this protein is involved in the repair of mismatches in DNA. It is required for dam-dependent methyl-directed DNA mismatch repair. May act as a 'molecular matchmaker', a protein that promotes the formation of a stable complex between two or more DNA-binding proteins in an ATP-dependent manner without itself being part of a final effector complex. The protein is DNA mismatch repair protein MutL of Chelativorans sp. (strain BNC1).